An 896-amino-acid polypeptide reads, in one-letter code: Protein translocase subunit SecA (896 aa).

ATP is bound by residues Gln-87, Gly-105–Thr-109, and Asp-507. The interval Glu-853–Pro-879 is disordered. The span at Thr-866–Arg-876 shows a compositional bias: basic and acidic residues. Zn(2+)-binding residues include Cys-880, Cys-882, Cys-891, and His-892.

The protein belongs to the SecA family. As to quaternary structure, monomer and homodimer. Part of the essential Sec protein translocation apparatus which comprises SecA, SecYEG and auxiliary proteins SecDF-YajC and YidC. Requires Zn(2+) as cofactor.

It localises to the cell inner membrane. The protein resides in the cytoplasm. It carries out the reaction ATP + H2O + cellular proteinSide 1 = ADP + phosphate + cellular proteinSide 2.. Part of the Sec protein translocase complex. Interacts with the SecYEG preprotein conducting channel. Has a central role in coupling the hydrolysis of ATP to the transfer of proteins into and across the cell membrane, serving both as a receptor for the preprotein-SecB complex and as an ATP-driven molecular motor driving the stepwise translocation of polypeptide chains across the membrane. This chain is Protein translocase subunit SecA, found in Legionella pneumophila (strain Corby).